A 372-amino-acid chain; its full sequence is N-methyl-L-tryptophan oxidase (372 aa).

4–34 (DLIIIGSGSVGAAAGYYATRAGLNVLMTDAH) contacts FAD. Position 308 is an S-8alpha-FAD cysteine (Cys-308).

This sequence belongs to the MSOX/MTOX family. MTOX subfamily. Monomer. It depends on FAD as a cofactor.

The enzyme catalyses N(alpha)-methyl-L-tryptophan + O2 + H2O = L-tryptophan + formaldehyde + H2O2. In terms of biological role, catalyzes the oxidative demethylation of N-methyl-L-tryptophan. This Escherichia coli (strain SMS-3-5 / SECEC) protein is N-methyl-L-tryptophan oxidase.